A 130-amino-acid chain; its full sequence is Large ribosomal subunit protein bL12 (130 aa).

It belongs to the bacterial ribosomal protein bL12 family. Homodimer. Part of the ribosomal stalk of the 50S ribosomal subunit. Forms a multimeric L10(L12)X complex, where L10 forms an elongated spine to which 2 to 4 L12 dimers bind in a sequential fashion. Binds GTP-bound translation factors.

Forms part of the ribosomal stalk which helps the ribosome interact with GTP-bound translation factors. Is thus essential for accurate translation. The chain is Large ribosomal subunit protein bL12 from Synechococcus sp. (strain WH7803).